We begin with the raw amino-acid sequence, 224 residues long: 2-C-methyl-D-erythritol 4-phosphate cytidylyltransferase (224 aa).

It belongs to the IspD/TarI cytidylyltransferase family. IspD subfamily.

It catalyses the reaction 2-C-methyl-D-erythritol 4-phosphate + CTP + H(+) = 4-CDP-2-C-methyl-D-erythritol + diphosphate. It participates in isoprenoid biosynthesis; isopentenyl diphosphate biosynthesis via DXP pathway; isopentenyl diphosphate from 1-deoxy-D-xylulose 5-phosphate: step 2/6. In terms of biological role, catalyzes the formation of 4-diphosphocytidyl-2-C-methyl-D-erythritol from CTP and 2-C-methyl-D-erythritol 4-phosphate (MEP). This chain is 2-C-methyl-D-erythritol 4-phosphate cytidylyltransferase, found in Caldicellulosiruptor saccharolyticus (strain ATCC 43494 / DSM 8903 / Tp8T 6331).